Here is a 136-residue protein sequence, read N- to C-terminus: Nucleoside diphosphate kinase (136 aa).

6 residues coordinate ATP: K10, F58, R86, T92, R104, and N114. H117 (pros-phosphohistidine intermediate) is an active-site residue.

Belongs to the NDK family. In terms of assembly, homotetramer. It depends on Mg(2+) as a cofactor.

Its subcellular location is the cytoplasm. It catalyses the reaction a 2'-deoxyribonucleoside 5'-diphosphate + ATP = a 2'-deoxyribonucleoside 5'-triphosphate + ADP. It carries out the reaction a ribonucleoside 5'-diphosphate + ATP = a ribonucleoside 5'-triphosphate + ADP. Major role in the synthesis of nucleoside triphosphates other than ATP. The ATP gamma phosphate is transferred to the NDP beta phosphate via a ping-pong mechanism, using a phosphorylated active-site intermediate. The chain is Nucleoside diphosphate kinase from Mycobacterium ulcerans (strain Agy99).